The primary structure comprises 460 residues: Protein unc-93 homolog A (460 aa).

The next 5 membrane-spanning stretches (helical) occupy residues 7–27 (ILIV…LQSL), 41–61 (SLSV…PIVI), 68–88 (WTIV…FYAS), 89–109 (WYTL…LWAA), and 139–159 (LFFL…SLIF). 2 N-linked (GlcNAc...) asparagine glycosylation sites follow: Asn168 and Asn189. A run of 6 helical transmembrane segments spans residues 203 to 223 (TLLG…AVFL), 292 to 312 (FVGY…LLFG), 321 to 341 (ICLF…LLLW), 345 to 365 (PNDF…DAIW), 390 to 410 (LWES…CVSV), and 412 to 432 (LYIL…VEYL).

This sequence belongs to the unc-93 family.

Its subcellular location is the membrane. This Xenopus laevis (African clawed frog) protein is Protein unc-93 homolog A (unc93a).